The primary structure comprises 592 residues: MPLISIQNAFLAFSDLEILKNAVLYINKKERISLIGKNGAGKSTLLKVINKNQELDHGSIIYQKNIKISYLKQDNPKNLDISIYDFIKNQLKKENNKEININTIVEIKKIIKTFQIDKHSLLSELSGGSLRKVVLGSALLSQPDVLLLDEPTNHLDINTIAWLEKFLKKFSGTTLFISHDRSFIQNLCTRIIDLDRGKLTSFPGDYKEFIKLKKENNRIEKTKKKLFDQHLEKEEIWIRKGIKARTTRNEGRVRNLKVLRKEYKNYKKIENFNNVIINEIKNYSGKIIFKLKNISFFIEKKTIIQSFSSIIQYGDKIGLIGNNGSGKSTMIKILMGEKKIQKGSIHFGTKLNIAYFDQDRSTLDSNKSILENVNNGREKIVLNGKEQHLIGYLKKFLFKPNQMKCLVKNLSGGECNRLLLAKLFLKPSNVLILDEPTNDLDLDTLELLENIIIKYSGTVLIVSHDRNFIENTVNKYWIFKGDGLINTHFSSHNNIIKEKNKKIQKKYVLNPIKSNISFLKTKQNQVKKELKKVLNEIEKIENSIKTLKIQMNEPDFFKQHIKNQLPIVKQFNIEEKKLEKILIYWENLEKKL.

ABC transporter domains are found at residues 1–221 (MPLI…RIEK) and 289–516 (FKLK…KSNI). Residues 36–43 (GKNGAGKS) and 321–328 (GNNGSGKS) each bind ATP. The stretch at 516 to 550 (ISFLKTKQNQVKKELKKVLNEIEKIENSIKTLKIQ) forms a coiled coil. The tract at residues 518–592 (FLKTKQNQVK…IYWENLEKKL (75 aa)) is C-terminal domain (CTD), binds DNA.

Belongs to the ABC transporter superfamily. ABCF family. Uup subfamily.

It is found in the cytoplasm. It catalyses the reaction ATP + H2O = ADP + phosphate + H(+). Its function is as follows. Probably plays a role in ribosome assembly or function. May be involved in resolution of branched DNA intermediates that result from template switching in postreplication gaps. Binds DNA and has ATPase activity. The sequence is that of ATP-binding protein Uup from Buchnera aphidicola subsp. Schizaphis graminum (strain Sg).